A 104-amino-acid polypeptide reads, in one-letter code: Flagellar hook-basal body complex protein FliE (104 aa).

It belongs to the FliE family.

Its subcellular location is the bacterial flagellum basal body. The sequence is that of Flagellar hook-basal body complex protein FliE from Escherichia coli (strain SE11).